Consider the following 344-residue polypeptide: Phenylalanine--tRNA ligase alpha subunit (344 aa).

E256 provides a ligand contact to Mg(2+).

The protein belongs to the class-II aminoacyl-tRNA synthetase family. Phe-tRNA synthetase alpha subunit type 1 subfamily. Tetramer of two alpha and two beta subunits. Mg(2+) is required as a cofactor.

It localises to the cytoplasm. The enzyme catalyses tRNA(Phe) + L-phenylalanine + ATP = L-phenylalanyl-tRNA(Phe) + AMP + diphosphate + H(+). This chain is Phenylalanine--tRNA ligase alpha subunit, found in Bacillus cytotoxicus (strain DSM 22905 / CIP 110041 / 391-98 / NVH 391-98).